Consider the following 219-residue polypeptide: 7-methyl-GTP pyrophosphatase (219 aa).

Catalysis depends on D89, which acts as the Proton acceptor.

Belongs to the Maf family. YceF subfamily. Requires a divalent metal cation as cofactor.

It is found in the cytoplasm. The catalysed reaction is N(7)-methyl-GTP + H2O = N(7)-methyl-GMP + diphosphate + H(+). Functionally, nucleoside triphosphate pyrophosphatase that hydrolyzes 7-methyl-GTP (m(7)GTP). May have a dual role in cell division arrest and in preventing the incorporation of modified nucleotides into cellular nucleic acids. This chain is 7-methyl-GTP pyrophosphatase, found in Polaromonas sp. (strain JS666 / ATCC BAA-500).